The sequence spans 234 residues: Ankyrin repeat-containing protein C6C3.08 (234 aa).

ANK repeat units follow at residues 36–66, 70–100, 106–135, 140–169, and 173–203; these read DKRT…KPDE, AGWT…DVDP, GGQT…ELIR, QGQT…PLNT, and YGFT…TLRK.

This chain is Ankyrin repeat-containing protein C6C3.08, found in Schizosaccharomyces pombe (strain 972 / ATCC 24843) (Fission yeast).